A 517-amino-acid chain; its full sequence is AAA ATPase forming ring-shaped complexes (517 aa).

The stretch at 25–53 forms a coiled coil; the sequence is ARNAKLVELLQASRTKLEEINGRLEALAE. ATP is bound at residue 233 to 238; that stretch reads GNGKTL.

This sequence belongs to the AAA ATPase family. Homohexamer. Assembles into a hexameric ring structure.

The sequence is that of AAA ATPase forming ring-shaped complexes from Corynebacterium jeikeium (strain K411).